Reading from the N-terminus, the 391-residue chain is Elongation factor Tu (391 aa).

Residues 10 to 201 (KPHVNIGTVG…AVDEYIPTPE (192 aa)) enclose the tr-type G domain. Residues 19–26 (GHVDHGKT) are G1. Residue 19–26 (GHVDHGKT) participates in GTP binding. Thr-26 contacts Mg(2+). A G2 region spans residues 55–59 (GITIS). Residues 76 to 79 (DCPG) are G3. GTP-binding positions include 76-80 (DCPGH) and 131-134 (NKVD). The interval 131–134 (NKVD) is G4. Positions 169-171 (SAL) are G5.

Belongs to the TRAFAC class translation factor GTPase superfamily. Classic translation factor GTPase family. EF-Tu/EF-1A subfamily. Monomer.

The protein resides in the cytoplasm. It catalyses the reaction GTP + H2O = GDP + phosphate + H(+). GTP hydrolase that promotes the GTP-dependent binding of aminoacyl-tRNA to the A-site of ribosomes during protein biosynthesis. The polypeptide is Elongation factor Tu (Ruegeria sp. (strain TM1040) (Silicibacter sp.)).